The chain runs to 775 residues: Dipeptidyl peptidase 4 (775 aa).

Positions 1 to 15 are cleaved as a signal peptide; sequence MKFLSLLLLAGIAQA. 4 N-linked (GlcNAc...) asparagine glycosylation sites follow: Asn81, Asn111, Asn170, and Asn219. Residues Ser613, Asp690, and His725 each act as charge relay system in the active site.

It belongs to the peptidase S9B family.

Its subcellular location is the secreted. The enzyme catalyses Release of an N-terminal dipeptide, Xaa-Yaa-|-Zaa-, from a polypeptide, preferentially when Yaa is Pro, provided Zaa is neither Pro nor hydroxyproline.. Extracellular dipeptidyl-peptidase which removes N-terminal dipeptides sequentially from polypeptides having unsubstituted N-termini provided that the penultimate residue is proline. Contributes to pathogenicity. In Trichophyton equinum (Horse ringworm fungus), this protein is Dipeptidyl peptidase 4 (DPP4).